A 684-amino-acid chain; its full sequence is Actin-related protein 5 (684 aa).

Residues 262–469 (KEKSVIIQLP…ARQKQKQKAN (208 aa)) adopt a coiled-coil conformation. Disordered stretches follow at residues 392–443 (KEKK…PEHY) and 481–500 (VNPT…EDPE). A compositionally biased stretch (basic and acidic residues) spans 402-443 (SMKDGRLAQKRKRDEEKEKEKEKEEERDRQEEESFLKDPEHY).

This sequence belongs to the actin family. ARP5 subfamily. In terms of assembly, component of the chromatin-remodeling Ino80 complex.

Its subcellular location is the nucleus. Functionally, proposed core component of the chromatin remodeling Ino80 complex which is involved in transcriptional regulation, DNA replication and probably DNA repair. This Dictyostelium discoideum (Social amoeba) protein is Actin-related protein 5 (arpE).